Consider the following 491-residue polypeptide: Probable glycine dehydrogenase (decarboxylating) subunit 2 (491 aa).

Lys273 carries the N6-(pyridoxal phosphate)lysine modification.

It belongs to the GcvP family. C-terminal subunit subfamily. In terms of assembly, the glycine cleavage system is composed of four proteins: P, T, L and H. In this organism, the P 'protein' is a heterodimer of two subunits. Pyridoxal 5'-phosphate is required as a cofactor.

It carries out the reaction N(6)-[(R)-lipoyl]-L-lysyl-[glycine-cleavage complex H protein] + glycine + H(+) = N(6)-[(R)-S(8)-aminomethyldihydrolipoyl]-L-lysyl-[glycine-cleavage complex H protein] + CO2. In terms of biological role, the glycine cleavage system catalyzes the degradation of glycine. The P protein binds the alpha-amino group of glycine through its pyridoxal phosphate cofactor; CO(2) is released and the remaining methylamine moiety is then transferred to the lipoamide cofactor of the H protein. This chain is Probable glycine dehydrogenase (decarboxylating) subunit 2, found in Bacillus cereus (strain AH187).